A 201-amino-acid polypeptide reads, in one-letter code: Superoxide dismutase [Mn] (201 aa).

Residues His-27, His-81, Asp-163, and His-167 each coordinate Mn(2+).

The protein belongs to the iron/manganese superoxide dismutase family. In terms of assembly, homodimer. It depends on Mn(2+) as a cofactor.

It is found in the secreted. The enzyme catalyses 2 superoxide + 2 H(+) = H2O2 + O2. Destroys superoxide anion radicals which are normally produced within the cells and which are toxic to biological systems. This is Superoxide dismutase [Mn] (sodA) from Streptococcus pyogenes serotype M1.